A 270-amino-acid chain; its full sequence is Beta carbonic anhydrase 1 (270 aa).

Zn(2+) contacts are provided by cysteine 39, aspartate 41, histidine 105, and cysteine 108.

This sequence belongs to the beta-class carbonic anhydrase family. Requires Zn(2+) as cofactor.

The catalysed reaction is hydrogencarbonate + H(+) = CO2 + H2O. Its function is as follows. Reversible hydration of carbon dioxide. The chain is Beta carbonic anhydrase 1 from Caenorhabditis briggsae.